We begin with the raw amino-acid sequence, 125 residues long: Large ribosomal subunit protein bL12 (125 aa).

The protein belongs to the bacterial ribosomal protein bL12 family. In terms of assembly, homodimer. Part of the ribosomal stalk of the 50S ribosomal subunit. Forms a multimeric L10(L12)X complex, where L10 forms an elongated spine to which 2 to 4 L12 dimers bind in a sequential fashion. Binds GTP-bound translation factors.

Its function is as follows. Forms part of the ribosomal stalk which helps the ribosome interact with GTP-bound translation factors. Is thus essential for accurate translation. This Rickettsia africae (strain ESF-5) protein is Large ribosomal subunit protein bL12.